The sequence spans 35 residues: Putative gene 58 protein (35 aa).

The sequence is that of Putative gene 58 protein (58) from Bacillus phage SP01 (Bacteriophage SP01).